The sequence spans 350 residues: TATA box-binding protein-like 2 (350 aa).

Positions 82–150 (ENRDQTVTGN…QPSPETPNSN (69 aa)) are disordered. Positions 94 to 116 (ASEESCRTRDRQSQLQLPDEHGS) are enriched in basic and acidic residues. Polar residues-rich tracts occupy residues 118-128 (LNLNSNSSPDP) and 139-150 (SNQPSPETPNSN).

Belongs to the TBP family. Interacts with TAF3. As to expression, expressed in myotubes and myofibers (at protein level). Expressed in a wide variety of tissues with highest levels in heart, lung, liver, uterus and placenta and especially the gonads. Expression is higher in the ovary than the testis, and within the ovary expression is localized to the oocytes.

The protein resides in the cytoplasm. It is found in the nucleus. In terms of biological role, transcription factor required in complex with TAF3 for the differentiation of myoblasts into myocytes. The complex replaces TFIID at specific promoters at an early stage in the differentiation process. In Mus musculus (Mouse), this protein is TATA box-binding protein-like 2.